We begin with the raw amino-acid sequence, 750 residues long: Photosystem I P700 chlorophyll a apoprotein A1 (750 aa).

The next 8 membrane-spanning stretches (helical) occupy residues 70-93, 156-179, 195-219, 291-309, 346-369, 385-411, 433-455, and 531-549; these read VFSA…FHGA, LYCT…FHYH, LNHH…HVSL, IAHH…GHMY, WHAQ…HHMY, LSLF…IFMV, AIIS…LYIH, and FLVH…LILL. Cys-573 and Cys-582 together coordinate [4Fe-4S] cluster. 2 helical membrane passes run 589-610 and 664-686; these read HVFL…HFSW and LSAY…MFLF. A chlorophyll a'-binding site is contributed by His-675. Residues Met-683 and Tyr-691 each contribute to the chlorophyll a site. Phylloquinone is bound at residue Trp-692. Residues 724–744 traverse the membrane as a helical segment; it reads AVGVTHYLLGGIATTWAFFLA.

Belongs to the PsaA/PsaB family. In terms of assembly, the PsaA/B heterodimer binds the P700 chlorophyll special pair and subsequent electron acceptors. PSI consists of a core antenna complex that captures photons, and an electron transfer chain that converts photonic excitation into a charge separation. The eukaryotic PSI reaction center is composed of at least 11 subunits. It depends on P700 is a chlorophyll a/chlorophyll a' dimer, A0 is one or more chlorophyll a, A1 is one or both phylloquinones and FX is a shared 4Fe-4S iron-sulfur center. as a cofactor.

The protein resides in the plastid. The protein localises to the chloroplast thylakoid membrane. It catalyses the reaction reduced [plastocyanin] + hnu + oxidized [2Fe-2S]-[ferredoxin] = oxidized [plastocyanin] + reduced [2Fe-2S]-[ferredoxin]. PsaA and PsaB bind P700, the primary electron donor of photosystem I (PSI), as well as the electron acceptors A0, A1 and FX. PSI is a plastocyanin-ferredoxin oxidoreductase, converting photonic excitation into a charge separation, which transfers an electron from the donor P700 chlorophyll pair to the spectroscopically characterized acceptors A0, A1, FX, FA and FB in turn. Oxidized P700 is reduced on the lumenal side of the thylakoid membrane by plastocyanin. The polypeptide is Photosystem I P700 chlorophyll a apoprotein A1 (Aethionema cordifolium (Lebanon stonecress)).